A 249-amino-acid polypeptide reads, in one-letter code: Esterase YjfP (249 aa).

Its function is as follows. Displays esterase activity toward palmitoyl-CoA and pNP-butyrate. The chain is Esterase YjfP (yjfP) from Escherichia coli (strain K12).